The sequence spans 170 residues: Peroxidase 2 (170 aa).

Residue Asn9 is glycosylated (N-linked (GlcNAc...) asparagine). His24 contacts heme b. Thr25 lines the Ca(2+) pocket. Cys31 and Cys59 are disulfide-bonded. Residues Asp73, Thr76, and Asp81 each contribute to the Ca(2+) site.

The protein belongs to the peroxidase family. Classical plant (class III) peroxidase subfamily. Requires Ca(2+) as cofactor. Heme b serves as cofactor.

The enzyme catalyses 2 a phenolic donor + H2O2 = 2 a phenolic radical donor + 2 H2O. Removal of H(2)O(2), oxidation of toxic reductants, biosynthesis and degradation of lignin, suberization, auxin catabolism, response to environmental stresses such as wounding, pathogen attack and oxidative stress. These functions might be dependent on each isozyme/isoform in each plant tissue. Its function is as follows. Involved in defense response to powdery meldew fungus. This Hordeum vulgare (Barley) protein is Peroxidase 2.